Consider the following 186-residue polypeptide: Putative thiamine-phosphate synthase 2 (186 aa).

4-amino-2-methyl-5-(diphosphooxymethyl)pyrimidine is bound by residues Gln-35–Lys-39 and Asn-67. Residue Glu-68 coordinates Mg(2+). Ser-105 provides a ligand contact to 4-amino-2-methyl-5-(diphosphooxymethyl)pyrimidine. A 2-[(2R,5Z)-2-carboxy-4-methylthiazol-5(2H)-ylidene]ethyl phosphate-binding site is contributed by Thr-131 to Ser-133. A 4-amino-2-methyl-5-(diphosphooxymethyl)pyrimidine-binding site is contributed by His-134. 2-[(2R,5Z)-2-carboxy-4-methylthiazol-5(2H)-ylidene]ethyl phosphate-binding positions include Gly-161 and Ile-181–Ser-182.

The protein belongs to the thiamine-phosphate synthase family. It depends on Mg(2+) as a cofactor.

It catalyses the reaction 2-[(2R,5Z)-2-carboxy-4-methylthiazol-5(2H)-ylidene]ethyl phosphate + 4-amino-2-methyl-5-(diphosphooxymethyl)pyrimidine + 2 H(+) = thiamine phosphate + CO2 + diphosphate. The enzyme catalyses 2-(2-carboxy-4-methylthiazol-5-yl)ethyl phosphate + 4-amino-2-methyl-5-(diphosphooxymethyl)pyrimidine + 2 H(+) = thiamine phosphate + CO2 + diphosphate. It carries out the reaction 4-methyl-5-(2-phosphooxyethyl)-thiazole + 4-amino-2-methyl-5-(diphosphooxymethyl)pyrimidine + H(+) = thiamine phosphate + diphosphate. The protein operates within cofactor biosynthesis; thiamine diphosphate biosynthesis; thiamine phosphate from 4-amino-2-methyl-5-diphosphomethylpyrimidine and 4-methyl-5-(2-phosphoethyl)-thiazole: step 1/1. Its function is as follows. Condenses 4-methyl-5-(beta-hydroxyethyl)thiazole monophosphate (THZ-P) and 2-methyl-4-amino-5-hydroxymethyl pyrimidine pyrophosphate (HMP-PP) to form thiamine monophosphate (TMP). The protein is Putative thiamine-phosphate synthase 2 (thiE2) of Aquifex aeolicus (strain VF5).